The following is a 366-amino-acid chain: Pyrimidine monooxygenase RutA (366 aa).

FMN-binding positions include 49–50 (IK), Asn-115, Glu-124, 140–141 (RY), and Ser-190.

Belongs to the NtaA/SnaA/DszA monooxygenase family. RutA subfamily.

The catalysed reaction is uracil + FMNH2 + NADH + O2 = (Z)-3-ureidoacrylate + FMN + NAD(+) + H2O + H(+). It carries out the reaction thymine + FMNH2 + NADH + O2 = (Z)-2-methylureidoacrylate + FMN + NAD(+) + H2O + H(+). Catalyzes the pyrimidine ring opening between N-3 and C-4 by an unusual flavin hydroperoxide-catalyzed mechanism, adding oxygen atoms in the process to yield ureidoacrylate peracid, that immediately reacts with FMN forming ureidoacrylate and FMN-N(5)-oxide. The FMN-N(5)-oxide reacts spontaneously with NADH to produce FMN. Requires the flavin reductase RutF to regenerate FMN in vivo. The polypeptide is Pyrimidine monooxygenase RutA (Serratia proteamaculans (strain 568)).